Here is a 191-residue protein sequence, read N- to C-terminus: NAD(P)H-quinone oxidoreductase subunit 6, chloroplastic (191 aa).

The next 5 membrane-spanning stretches (helical) occupy residues 10 to 30 (TIFL…ILLT), 32 to 52 (IVYS…LYLL), 61 to 81 (AQIL…VMLI), 89 to 109 (FFVY…SIFL), and 153 to 173 (FLLP…GAIT).

The protein belongs to the complex I subunit 6 family. As to quaternary structure, NDH is composed of at least 16 different subunits, 5 of which are encoded in the nucleus.

The protein resides in the plastid. The protein localises to the chloroplast thylakoid membrane. It carries out the reaction a plastoquinone + NADH + (n+1) H(+)(in) = a plastoquinol + NAD(+) + n H(+)(out). It catalyses the reaction a plastoquinone + NADPH + (n+1) H(+)(in) = a plastoquinol + NADP(+) + n H(+)(out). Its function is as follows. NDH shuttles electrons from NAD(P)H:plastoquinone, via FMN and iron-sulfur (Fe-S) centers, to quinones in the photosynthetic chain and possibly in a chloroplast respiratory chain. The immediate electron acceptor for the enzyme in this species is believed to be plastoquinone. Couples the redox reaction to proton translocation, and thus conserves the redox energy in a proton gradient. The sequence is that of NAD(P)H-quinone oxidoreductase subunit 6, chloroplastic (ndhG) from Marchantia polymorpha (Common liverwort).